The primary structure comprises 342 residues: Probable receptor-like protein kinase At4g10390 (342 aa).

A Protein kinase domain is found at 41 to 336 (SNFSRLIGSG…IKEIPSLSFL (296 aa)). ATP is bound by residues 47 to 55 (IGSGGYSSI) and lysine 69. Catalysis depends on aspartate 165, which acts as the Proton acceptor. Serine 169 and serine 201 each carry phosphoserine. Tyrosine 220 is subject to Phosphotyrosine.

The protein belongs to the protein kinase superfamily. Ser/Thr protein kinase family.

The enzyme catalyses L-seryl-[protein] + ATP = O-phospho-L-seryl-[protein] + ADP + H(+). It carries out the reaction L-threonyl-[protein] + ATP = O-phospho-L-threonyl-[protein] + ADP + H(+). The chain is Probable receptor-like protein kinase At4g10390 from Arabidopsis thaliana (Mouse-ear cress).